We begin with the raw amino-acid sequence, 412 residues long: Transforming growth factor beta-3 proprotein (412 aa).

The first 23 residues, 1–23, serve as a signal peptide directing secretion; that stretch reads MKMHLQRALVVLALLNLATVSLS. N-linked (GlcNAc...) asparagine glycans are attached at residues Asn-74, Asn-135, and Asn-142. Positions 261-263 match the Cell attachment site motif; the sequence is RGD. The residue at position 293 (Gln-293) is an N5-methylglutamine. Disulfide bonds link Cys-307–Cys-316, Cys-315–Cys-378, Cys-344–Cys-409, and Cys-348–Cys-411.

Belongs to the TGF-beta family. As to quaternary structure, interacts with ASPN. Latency-associated peptide: Homodimer; disulfide-linked. Latency-associated peptide: Interacts with Transforming growth factor beta-3 (TGF-beta-3) chain; interaction is non-covalent and maintains (TGF-beta-3) in a latent state. Latency-associated peptide: Interacts with LRRC32/GARP; leading to regulate activation of TGF-beta-3 and promote epithelial fusion during palate development. Latency-associated peptide: Interacts (via cell attachment site) with integrins, leading to release of the active TGF-beta-3. Transforming growth factor beta-3: Homodimer; disulfide-linked. Transforming growth factor beta-3: Interacts with TGF-beta receptors (TGFBR1 and TGFBR2), leading to signal transduction. Post-translationally, transforming growth factor beta-3 proprotein: The precursor proprotein is cleaved in the Golgi apparatus to form Transforming growth factor beta-3 (TGF-beta-3) and Latency-associated peptide (LAP) chains, which remain non-covalently linked, rendering TGF-beta-3 inactive. Methylated at Gln-293 by N6AMT1. Expressed in cardiomyocytes.

Its subcellular location is the secreted. The protein resides in the extracellular space. It is found in the extracellular matrix. Transforming growth factor beta-3 proprotein: Precursor of the Latency-associated peptide (LAP) and Transforming growth factor beta-3 (TGF-beta-3) chains, which constitute the regulatory and active subunit of TGF-beta-3, respectively. In terms of biological role, required to maintain the Transforming growth factor beta-3 (TGF-beta-3) chain in a latent state during storage in extracellular matrix. Associates non-covalently with TGF-beta-3 and regulates its activation via interaction with 'milieu molecules', such as LTBP1 and LRRC32/GARP, that control activation of TGF-beta-3. Interaction with integrins results in distortion of the Latency-associated peptide chain and subsequent release of the active TGF-beta-3. Its function is as follows. Transforming growth factor beta-3: Multifunctional protein that regulates embryogenesis and cell differentiation and is required in various processes such as secondary palate development. Activation into mature form follows different steps: following cleavage of the proprotein in the Golgi apparatus, Latency-associated peptide (LAP) and Transforming growth factor beta-3 (TGF-beta-3) chains remain non-covalently linked rendering TGF-beta-3 inactive during storage in extracellular matrix. At the same time, LAP chain interacts with 'milieu molecules', such as LTBP1 and LRRC32/GARP that control activation of TGF-beta-3 and maintain it in a latent state during storage in extracellular milieus. TGF-beta-3 is released from LAP by integrins: integrin-binding results in distortion of the LAP chain and subsequent release of the active TGF-beta-3. Once activated following release of LAP, TGF-beta-3 acts by binding to TGF-beta receptors (TGFBR1 and TGFBR2), which transduce signal. This chain is Transforming growth factor beta-3 proprotein (Tgfb3), found in Rattus norvegicus (Rat).